A 437-amino-acid chain; its full sequence is Phosphoribosylamine--glycine ligase (437 aa).

The region spanning Lys-109–Asn-316 is the ATP-grasp domain. Val-135–Ser-196 provides a ligand contact to ATP. Mg(2+)-binding residues include Glu-286 and Asn-288.

It belongs to the GARS family. Mg(2+) serves as cofactor. Requires Mn(2+) as cofactor.

It carries out the reaction 5-phospho-beta-D-ribosylamine + glycine + ATP = N(1)-(5-phospho-beta-D-ribosyl)glycinamide + ADP + phosphate + H(+). Its pathway is purine metabolism; IMP biosynthesis via de novo pathway; N(1)-(5-phospho-D-ribosyl)glycinamide from 5-phospho-alpha-D-ribose 1-diphosphate: step 2/2. The sequence is that of Phosphoribosylamine--glycine ligase from Xylella fastidiosa (strain 9a5c).